A 430-amino-acid polypeptide reads, in one-letter code: MDRIRIVGGNELHGVIPISGAKNAALPLMIASLLTDDTLTLENVPHLADVEQLIRILGNHGADISVNGRRERQGESYARTVHFTSRNIVSTTAPYELVSKMRASFWVIGPLLAREGRARVSLPGGCAIGTRPVDLFIEGLTALGASIEIDGGYVNATAPAGGLIGGRYTFPKVSVGATHVLMMAATLANGTTVLGNAAREPEVVDLAKCLNAMGAKISGQGTSTITIEGVRSLSGARHRVLPDRIETGTYAMAVAMAGGDVILEDTEASLLDTALEAIRRAGAEISDTNNGIRIVRNGAGIRPVDIVTDPFPGFPTDLQAQFMGLMTRSSGVSHITETIFENRFMHVQELARLGAKISLSGQTAKVEGVSRLKGAPVMATDLRASVSLVIAGLAAEGETMVSRVYHLDRGFERLEEKLTRCGAHVERVSD.

Residue 22 to 23 participates in phosphoenolpyruvate binding; sequence KN. Arg-102 contacts UDP-N-acetyl-alpha-D-glucosamine. The Proton donor role is filled by Cys-126. Cys-126 bears the 2-(S-cysteinyl)pyruvic acid O-phosphothioketal mark. Residues 131 to 135, 172 to 175, Asp-317, and Ile-339 each bind UDP-N-acetyl-alpha-D-glucosamine; these read RPVDL and KVSV.

Belongs to the EPSP synthase family. MurA subfamily.

It localises to the cytoplasm. It carries out the reaction phosphoenolpyruvate + UDP-N-acetyl-alpha-D-glucosamine = UDP-N-acetyl-3-O-(1-carboxyvinyl)-alpha-D-glucosamine + phosphate. The protein operates within cell wall biogenesis; peptidoglycan biosynthesis. Its function is as follows. Cell wall formation. Adds enolpyruvyl to UDP-N-acetylglucosamine. The polypeptide is UDP-N-acetylglucosamine 1-carboxyvinyltransferase (Sinorhizobium medicae (strain WSM419) (Ensifer medicae)).